The primary structure comprises 159 residues: Sec-independent protein translocase protein TatB (159 aa).

The chain crosses the membrane as a helical span at residues 1 to 21 (MIDIGLSKMALIGAVALIVIG).

It belongs to the TatB family. As to quaternary structure, the Tat system comprises two distinct complexes: a TatABC complex, containing multiple copies of TatA, TatB and TatC subunits, and a separate TatA complex, containing only TatA subunits. Substrates initially bind to the TatABC complex, which probably triggers association of the separate TatA complex to form the active translocon.

Its subcellular location is the cell inner membrane. Functionally, part of the twin-arginine translocation (Tat) system that transports large folded proteins containing a characteristic twin-arginine motif in their signal peptide across membranes. Together with TatC, TatB is part of a receptor directly interacting with Tat signal peptides. TatB may form an oligomeric binding site that transiently accommodates folded Tat precursor proteins before their translocation. This is Sec-independent protein translocase protein TatB from Acidovorax sp. (strain JS42).